A 331-amino-acid polypeptide reads, in one-letter code: Biotin synthase (331 aa).

Positions 43-267 (NTVQVSTLLS…LMPASYVRLS (225 aa)) constitute a Radical SAM core domain. Residues cysteine 58, cysteine 62, and cysteine 65 each coordinate [4Fe-4S] cluster. Residues cysteine 102, cysteine 133, cysteine 193, and arginine 265 each contribute to the [2Fe-2S] cluster site.

It belongs to the radical SAM superfamily. Biotin synthase family. As to quaternary structure, homodimer. [4Fe-4S] cluster is required as a cofactor. It depends on [2Fe-2S] cluster as a cofactor.

It catalyses the reaction (4R,5S)-dethiobiotin + (sulfur carrier)-SH + 2 reduced [2Fe-2S]-[ferredoxin] + 2 S-adenosyl-L-methionine = (sulfur carrier)-H + biotin + 2 5'-deoxyadenosine + 2 L-methionine + 2 oxidized [2Fe-2S]-[ferredoxin]. The protein operates within cofactor biosynthesis; biotin biosynthesis; biotin from 7,8-diaminononanoate: step 2/2. Functionally, catalyzes the conversion of dethiobiotin (DTB) to biotin by the insertion of a sulfur atom into dethiobiotin via a radical-based mechanism. In Alkalilimnicola ehrlichii (strain ATCC BAA-1101 / DSM 17681 / MLHE-1), this protein is Biotin synthase.